Reading from the N-terminus, the 340-residue chain is Phosphoribosylformylglycinamidine cyclo-ligase (340 aa).

The protein belongs to the AIR synthase family.

It is found in the cytoplasm. It carries out the reaction 2-formamido-N(1)-(5-O-phospho-beta-D-ribosyl)acetamidine + ATP = 5-amino-1-(5-phospho-beta-D-ribosyl)imidazole + ADP + phosphate + H(+). Its pathway is purine metabolism; IMP biosynthesis via de novo pathway; 5-amino-1-(5-phospho-D-ribosyl)imidazole from N(2)-formyl-N(1)-(5-phospho-D-ribosyl)glycinamide: step 2/2. In Streptococcus agalactiae serotype Ia (strain ATCC 27591 / A909 / CDC SS700), this protein is Phosphoribosylformylglycinamidine cyclo-ligase.